A 129-amino-acid chain; its full sequence is Small ribosomal subunit protein uS11 (129 aa).

The protein belongs to the universal ribosomal protein uS11 family. Part of the 30S ribosomal subunit. Interacts with proteins S7 and S18. Binds to IF-3.

Its function is as follows. Located on the platform of the 30S subunit, it bridges several disparate RNA helices of the 16S rRNA. Forms part of the Shine-Dalgarno cleft in the 70S ribosome. The protein is Small ribosomal subunit protein uS11 of Azorhizobium caulinodans (strain ATCC 43989 / DSM 5975 / JCM 20966 / LMG 6465 / NBRC 14845 / NCIMB 13405 / ORS 571).